A 155-amino-acid chain; its full sequence is Ribonuclease H (155 aa).

Residues 1–142 (MLKQVEIFTD…CDELARAAAS (142 aa)) form the RNase H type-1 domain. Mg(2+) contacts are provided by Asp-10, Glu-48, Asp-70, and Asp-134.

Belongs to the RNase H family. In terms of assembly, monomer. Mg(2+) serves as cofactor.

The protein localises to the cytoplasm. The enzyme catalyses Endonucleolytic cleavage to 5'-phosphomonoester.. Its function is as follows. Endonuclease that specifically degrades the RNA of RNA-DNA hybrids. The sequence is that of Ribonuclease H from Klebsiella pneumoniae subsp. pneumoniae (strain ATCC 700721 / MGH 78578).